The primary structure comprises 283 residues: Bifunctional protein FolD (283 aa).

Residues 159–161, Ser184, and Ile225 contribute to the NADP(+) site; that span reads GRS.

This sequence belongs to the tetrahydrofolate dehydrogenase/cyclohydrolase family. Homodimer.

It carries out the reaction (6R)-5,10-methylene-5,6,7,8-tetrahydrofolate + NADP(+) = (6R)-5,10-methenyltetrahydrofolate + NADPH. The catalysed reaction is (6R)-5,10-methenyltetrahydrofolate + H2O = (6R)-10-formyltetrahydrofolate + H(+). The protein operates within one-carbon metabolism; tetrahydrofolate interconversion. Catalyzes the oxidation of 5,10-methylenetetrahydrofolate to 5,10-methenyltetrahydrofolate and then the hydrolysis of 5,10-methenyltetrahydrofolate to 10-formyltetrahydrofolate. The polypeptide is Bifunctional protein FolD (Methanoculleus marisnigri (strain ATCC 35101 / DSM 1498 / JR1)).